A 389-amino-acid polypeptide reads, in one-letter code: Chalcone synthase 1A (389 aa).

Residue Cys164 is part of the active site.

This sequence belongs to the thiolase-like superfamily. Chalcone/stilbene synthases family.

It carries out the reaction (E)-4-coumaroyl-CoA + 3 malonyl-CoA + 3 H(+) = 2',4,4',6'-tetrahydroxychalcone + 3 CO2 + 4 CoA. It participates in secondary metabolite biosynthesis; flavonoid biosynthesis. In terms of biological role, the primary product of this enzyme is 4,2',4',6'-tetrahydroxychalcone (also termed naringenin-chalcone or chalcone) which can under specific conditions spontaneously isomerize into naringenin. This is Chalcone synthase 1A (CHS-1A) from Pisum sativum (Garden pea).